Here is a 350-residue protein sequence, read N- to C-terminus: GDSL esterase/lipase At4g10955 (350 aa).

Belongs to the 'GDSL' lipolytic enzyme family.

The polypeptide is GDSL esterase/lipase At4g10955 (Arabidopsis thaliana (Mouse-ear cress)).